Reading from the N-terminus, the 970-residue chain is Sodium/calcium exchanger 1 (970 aa).

A signal peptide spans 1-32 (MLQLRLLPTFSMGCHLLAVVALLFSHVDLISA). Topologically, residues 33–71 (ETEMEGEGNETGECTGSYYCKKGVILPIWEPQDPSFGDK) are extracellular. N-linked (GlcNAc...) asparagine glycosylation occurs at asparagine 41. A helical membrane pass occupies residues 72 to 92 (IARATVYFVAMVYMFLGVSII). At 93-133 (ADRFMSSIEVITSQEKEITIKKPNGETTKTTVRIWNETVSN) the chain is on the cytoplasmic side. A helical transmembrane segment spans residues 134-154 (LTLMALGSSAPEILLSVIEVC). Residues 138 to 178 (ALGSSAPEILLSVIEVCGHNFTAGDLGPSTIVGSAAFNMFI) form an Alpha-1 repeat. Over 155–167 (GHNFTAGDLGPST) the chain is Extracellular. N-linked (GlcNAc...) asparagine glycosylation is present at asparagine 157. The helical transmembrane segment at 168–188 (IVGSAAFNMFIIIALCVYVVP) threads the bilayer. At 189 to 201 (DGETRKIKHLRVF) the chain is on the cytoplasmic side. The helical transmembrane segment at 202–222 (FVTAAWSIFAYTWLYIILSVI) threads the bilayer. The Extracellular segment spans residues 223-228 (SPGVVE). Residues 229-249 (VWEGLLTFFFFPICVVFAWVA) traverse the membrane as a helical segment. At 250–797 (DRRLLFYKYV…FVPPTEYWNG (548 aa)) the chain is on the cytoplasmic side. The interval 251 to 270 (RRLLFYKYVYKRYRAGKQRG) is putative calmodulin-binding region. A phosphoserine mark is found at serine 282 and serine 389. Calx-beta domains follow at residues 393–493 (VNTE…VHLS) and 524–624 (ATVT…LEIG). Ca(2+)-binding residues include glutamate 417, aspartate 453, aspartate 478, aspartate 479, isoleucine 481, glutamate 483, glutamate 486, aspartate 530, aspartate 531, aspartate 532, glutamate 548, aspartate 584, aspartate 610, glutamate 611, glutamate 612, and glutamate 715. A helical membrane pass occupies residues 798-818 (WACFIVSILMIGILTAFIGDL). At 819 to 821 (ASH) the chain is on the extracellular side. The chain crosses the membrane as a helical span at residues 822 to 842 (FGCTIGLKDSVTAVVFVALGT). One copy of the Alpha-2 repeat lies at 839 to 875 (ALGTSVPDTFASKVAATQDQYADASIGNVTGSNAVNV). Residues 843-871 (SVPDTFASKVAATQDQYADASIGNVTGSN) are Cytoplasmic-facing. A helical membrane pass occupies residues 872-892 (AVNVFLGIGVAWSIAAIYHAA). Over 893-903 (NGEQFKVSPGT) the chain is Extracellular. A helical transmembrane segment spans residues 904–924 (LAFSVTLFTIFAFINVGVLLY). The Cytoplasmic portion of the chain corresponds to 925-941 (RRRPEIGGELGGPRTAK). The chain crosses the membrane as a helical span at residues 942–962 (LLTSCLFVLLWLLYIFFSSLE). Over 963–970 (AYCHIKGF) the chain is Extracellular.

This sequence belongs to the Ca(2+):cation antiporter (CaCA) (TC 2.A.19) family. SLC8 subfamily. As to expression, cardiac sarcolemma (at protein level).

The protein localises to the cell membrane. It is found in the sarcolemma. It catalyses the reaction Ca(2+)(in) + 3 Na(+)(out) = Ca(2+)(out) + 3 Na(+)(in). Its activity is regulated as follows. Activated by micromolar levels of Ca(2+). In the absence of regulatory Ca(2+), channels open rapidly, and then inactivate rapidly. Inactivation is enhanced by Na(+) and is inhibited by micromolar levels of Ca(2+). In terms of biological role, mediates the exchange of one Ca(2+) ion against three to four Na(+) ions across the cell membrane, and thereby contributes to the regulation of cytoplasmic Ca(2+) levels and Ca(2+)-dependent cellular processes. Contributes to Ca(2+) transport during excitation-contraction coupling in muscle. In a first phase, voltage-gated channels mediate the rapid increase of cytoplasmic Ca(2+) levels due to release of Ca(2+) stores from the endoplasmic reticulum. SLC8A1 mediates the export of Ca(2+) from the cell during the next phase, so that cytoplasmic Ca(2+) levels rapidly return to baseline. Required for normal embryonic heart development and the onset of heart contractions. This Canis lupus familiaris (Dog) protein is Sodium/calcium exchanger 1 (SLC8A1).